A 307-amino-acid chain; its full sequence is Mycothiol acetyltransferase (307 aa).

N-acetyltransferase domains are found at residues 12 to 152 (TRTD…APIP) and 160 to 307 (VTLR…YQRS). Glu-43 is a 1D-myo-inositol 2-(L-cysteinylamino)-2-deoxy-alpha-D-glucopyranoside binding site. 87–89 (LAV) provides a ligand contact to acetyl-CoA. 3 residues coordinate 1D-myo-inositol 2-(L-cysteinylamino)-2-deoxy-alpha-D-glucopyranoside: Glu-187, Lys-227, and Glu-239. Acetyl-CoA contacts are provided by residues 243–245 (LGV) and 250–256 (HGGGLGK). Residue Tyr-278 coordinates 1D-myo-inositol 2-(L-cysteinylamino)-2-deoxy-alpha-D-glucopyranoside.

It belongs to the acetyltransferase family. MshD subfamily. As to quaternary structure, monomer.

The enzyme catalyses 1D-myo-inositol 2-(L-cysteinylamino)-2-deoxy-alpha-D-glucopyranoside + acetyl-CoA = mycothiol + CoA + H(+). Functionally, catalyzes the transfer of acetyl from acetyl-CoA to desacetylmycothiol (Cys-GlcN-Ins) to form mycothiol. The chain is Mycothiol acetyltransferase from Salinispora arenicola (strain CNS-205).